Here is a 318-residue protein sequence, read N- to C-terminus: Serpentine receptor class delta-25 (318 aa).

A run of 7 helical transmembrane segments spans residues 5–25 (LLHS…MYLA), 38–58 (VVIT…FFVM), 88–108 (HMFM…SYLF), 126–146 (IAFY…SIYI), 176–196 (ITLL…YTFI), 226–246 (TFKL…VAMF), and 258–278 (IVSV…IIFV).

It belongs to the nematode receptor-like protein srd family.

It localises to the membrane. This is Serpentine receptor class delta-25 (srd-25) from Caenorhabditis elegans.